The primary structure comprises 332 residues: GTPase Obg (332 aa).

Residues 1-159 (MKFLDQAKIY…RWVWLRLKLI (159 aa)) enclose the Obg domain. In terms of domain architecture, OBG-type G spans 160-328 (ADAGLVGLPN…VLRETLRMIR (169 aa)). GTP-binding positions include 166-173 (GLPNAGKS), 191-195 (FTTLH), 213-216 (DIPG), 280-283 (NKMD), and 309-311 (SAA). Mg(2+) is bound by residues S173 and T193.

The protein belongs to the TRAFAC class OBG-HflX-like GTPase superfamily. OBG GTPase family. In terms of assembly, monomer. The cofactor is Mg(2+).

Its subcellular location is the cytoplasm. Its function is as follows. An essential GTPase which binds GTP, GDP and possibly (p)ppGpp with moderate affinity, with high nucleotide exchange rates and a fairly low GTP hydrolysis rate. Plays a role in control of the cell cycle, stress response, ribosome biogenesis and in those bacteria that undergo differentiation, in morphogenesis control. This is GTPase Obg from Acidiphilium cryptum (strain JF-5).